Here is a 960-residue protein sequence, read N- to C-terminus: Angiomotin-like protein 1 (960 aa).

The disordered stretch occupies residues serine 196–lysine 248. Phosphoserine is present on residues serine 243, serine 271, and serine 297. The stretch at arginine 261–leucine 281 forms a coiled coil. 3 disordered regions span residues alanine 277–phenylalanine 317, leucine 381–valine 407, and proline 413–leucine 432. The span at glutamine 388–serine 401 shows a compositional bias: low complexity. Coiled coils occupy residues valine 440–arginine 641 and alanine 667–serine 697. Serine 722 carries the post-translational modification Phosphoserine. The stretch at serine 731–histidine 761 forms a coiled coil. The tract at residues glutamine 775 to threonine 826 is disordered. 3 positions are modified to phosphoserine: serine 795, serine 807, and serine 830. The segment covering glycine 804 to leucine 817 has biased composition (polar residues). Residues asparagine 842 to aspartate 952 form a disordered region. Residues alanine 845–alanine 870 are compositionally biased toward low complexity. Positions proline 898–proline 911 are enriched in polar residues. Serine 904 bears the Phosphoserine mark. Threonine 906 bears the Phosphothreonine mark. Serine 910 carries the post-translational modification Phosphoserine. The short motif at glutamate 957–isoleucine 960 is the PDZ-binding element.

Belongs to the angiomotin family. Polyubiquitinated by NEDD4, leading to proteasomal degradation.

The protein localises to the cell junction. It is found in the tight junction. Inhibits the Wnt/beta-catenin signaling pathway, probably by recruiting CTNNB1 to recycling endosomes and hence preventing its translocation to the nucleus. The protein is Angiomotin-like protein 1 (AMOTL1) of Bos taurus (Bovine).